The sequence spans 137 residues: Nucleoside diphosphate kinase (137 aa).

Positions 9, 57, 85, 91, 102, and 112 each coordinate ATP. Histidine 115 serves as the catalytic Pros-phosphohistidine intermediate.

The protein belongs to the NDK family. Homotetramer. It depends on Mg(2+) as a cofactor.

The protein localises to the cytoplasm. It carries out the reaction a 2'-deoxyribonucleoside 5'-diphosphate + ATP = a 2'-deoxyribonucleoside 5'-triphosphate + ADP. The catalysed reaction is a ribonucleoside 5'-diphosphate + ATP = a ribonucleoside 5'-triphosphate + ADP. Functionally, major role in the synthesis of nucleoside triphosphates other than ATP. The ATP gamma phosphate is transferred to the NDP beta phosphate via a ping-pong mechanism, using a phosphorylated active-site intermediate. The protein is Nucleoside diphosphate kinase of Campylobacter lari (strain RM2100 / D67 / ATCC BAA-1060).